Here is a 632-residue protein sequence, read N- to C-terminus: Basic helix-loop-helix ARNT-like protein 1 (632 aa).

The disordered stretch occupies residues 1 to 39 (MADQRMDISSTISDFMSPGPTDLLSGSLGTSGVDCNRKR). Ser-17 is subject to Phosphoserine; by GSK3-beta. A Phosphothreonine; by GSK3-beta modification is found at Thr-21. The Nuclear localization signal signature appears at 36–41 (NRKRKG). One can recognise a bHLH domain in the interval 79 to 132 (NAREAHSQIEKRRRDKMNSFIDELASLVPTCNAMSRKLDKLTVLRMAVQHMKTL). A Phosphoserine modification is found at Ser-85. Residue Ser-97 is modified to Phosphoserine; by CK2. The short motif at 149–159 (LSDDELKHLIL) is the Nuclear export signal 1 element. A PAS 1 domain is found at 150-222 (SDDELKHLIL…EQLSSSDTAP (73 aa)). Lys-259 is covalently cross-linked (Glycyl lysine isopeptide (Lys-Gly) (interchain with G-Cter in SUMO2 and SUMO3)). Residue Lys-266 forms a Glycyl lysine isopeptide (Lys-Gly) (interchain with G-Cter in SUMO); alternate linkage. A Glycyl lysine isopeptide (Lys-Gly) (interchain with G-Cter in SUMO2); alternate cross-link involves residue Lys-266. Positions 333–403 (QPANGEIRVK…CHRQVLQTRE (71 aa)) constitute a PAS 2 domain. The Nuclear export signal 2 motif lies at 367–375 (LAYLPQELL). Residues 408–451 (NCYKFKIKDGSFITLRSRWFSFMNPWTKEVEYIVSTNTVVLANV) form the PAC domain. Disordered regions lie at residues 465–498 (PPHSMDSMLPSGEGGPKRTHPTVPGIPGGTRAGA) and 517–601 (GSSP…SPSN). An interaction with CIART region spans residues 514 to 594 (RIRGSSPSSC…IGIDMIDNDQ (81 aa)). Residues 517–527 (GSSPSSCGSSP) are compositionally biased toward low complexity. An N6-acetyllysine modification is found at Lys-544.

As to quaternary structure, component of the circadian clock oscillator which includes the CRY1/2 proteins, CLOCK or NPAS2, BMAL1 or BMAL2, CSNK1D and/or CSNK1E, TIMELESS and the PER1/2/3 proteins. Forms a heterodimer with CLOCK. The CLOCK-BMAL1 heterodimer is required for E-box-dependent transactivation, for CLOCK nuclear translocation and degradation, and, for phosphorylation of both CLOCK and BMAL1. Part of a nuclear complex which also includes RACK1 and PRKCA; RACK1 and PRKCA are recruited to the complex in a circadian manner. Interacts with NPAS2. Interacts with EZH2. Interacts with SUMO3. Interacts with SIRT1. Interacts with AHR. Interacts with ID1, ID2 and ID3. Interacts with DDX4. Interacts with OGT. Interacts with EED and SUZ12. Interacts with MTA1. Interacts with CIART. Interacts with HSP90. Interacts with KAT2B and EP300. Interacts with BHLHE40/DEC1 and BHLHE41/DEC2. Interacts with RELB and the interaction is enhanced in the presence of CLOCK. Interacts with PER1, PER2, CRY1 and CRY2 and this interaction requires a translocation to the nucleus. Interaction of the CLOCK-BMAL1 heterodimer with PER or CRY inhibits transcription activation. Interaction of the CLOCK-BMAL1 with CRY1 is independent of DNA but with PER2 is off DNA. The CLOCK-BMAL1 heterodimer interacts with GSK3B. Interacts with KDM5A. Interacts with KMT2A; in a circadian manner. Interacts with UBE3A. Interacts with PRKCG. Interacts with MAGEL2. Interacts with NCOA2. Interacts with THRAP3. The CLOCK-BMAL1 heterodimer interacts with PASD1. Interacts with PASD1. Interacts with USP9X. Interacts with PIWIL2 (via PIWI domain). Interacts with HDAC3. Interacts with HNF4A. In terms of processing, ubiquitinated, leading to its proteasomal degradation. Deubiquitinated by USP9X. O-glycosylated; contains O-GlcNAc. O-glycosylation by OGT prevents protein degradation by inhibiting ubiquitination. It also stabilizes the CLOCK-BMAL1 heterodimer thereby increasing CLOCK-BMAL1-mediated transcription of genes in the negative loop of the circadian clock such as PER1/2/3 and CRY1/2. Post-translationally, acetylated on Lys-544 by CLOCK during the repression phase of the circadian cycle. Acetylation facilitates recruitment of CRY1 protein and initiates the repression phase of the circadian cycle. Acetylated at Lys-544 by KAT5 during the activation phase of the cycle, leading to recruitment of the positive transcription elongation factor b (P-TEFb) and BRD4, followed by productive elongation of circadian transcripts. Deacetylated by SIRT1, which may result in decreased protein stability. In terms of processing, phosphorylated upon dimerization with CLOCK. Phosphorylation enhances the transcriptional activity, alters the subcellular localization and decreases the stability of the CLOCK-BMAL1 heterodimer by promoting its degradation. Phosphorylation shows circadian variations in the liver with a peak between CT10 to CT14. Phosphorylation at Ser-97 by CK2 is essential for its nuclear localization, its interaction with CLOCK and controls CLOCK nuclear entry. Dephosphorylation at Ser-85 is important for dimerization with CLOCK and transcriptional activity. Sumoylated on Lys-266 upon dimerization with CLOCK. Predominantly conjugated to poly-SUMO2/3 rather than SUMO1 and the level of these conjugates undergo rhythmic variation, peaking at CT9-CT12. Sumoylation localizes it exclusively to the PML body and promotes its ubiquitination in the PML body, ubiquitin-dependent proteasomal degradation and the transcriptional activity of the CLOCK-BMAL1 heterodimer. Post-translationally, undergoes lysosome-mediated degradation in a time-dependent manner in the liver. As to expression, expressed in liver and testis (at protein level). Expressed in the suprachiasmatic nucleus (SCN) in a circadian manner.

It localises to the nucleus. Its subcellular location is the cytoplasm. The protein resides in the PML body. The redox state of the cell can modulate the transcriptional activity of the CLOCK-BMAL1 and NPAS2-BMAL1 heterodimers; NADH and NADPH enhance the DNA-binding activity of the heterodimers. Transcriptional activator which forms a core component of the circadian clock. The circadian clock, an internal time-keeping system, regulates various physiological processes through the generation of approximately 24 hour circadian rhythms in gene expression, which are translated into rhythms in metabolism and behavior. It is derived from the Latin roots 'circa' (about) and 'diem' (day) and acts as an important regulator of a wide array of physiological functions including metabolism, sleep, body temperature, blood pressure, endocrine, immune, cardiovascular, and renal function. Consists of two major components: the central clock, residing in the suprachiasmatic nucleus (SCN) of the brain, and the peripheral clocks that are present in nearly every tissue and organ system. Both the central and peripheral clocks can be reset by environmental cues, also known as Zeitgebers (German for 'timegivers'). The predominant Zeitgeber for the central clock is light, which is sensed by retina and signals directly to the SCN. The central clock entrains the peripheral clocks through neuronal and hormonal signals, body temperature and feeding-related cues, aligning all clocks with the external light/dark cycle. Circadian rhythms allow an organism to achieve temporal homeostasis with its environment at the molecular level by regulating gene expression to create a peak of protein expression once every 24 hours to control when a particular physiological process is most active with respect to the solar day. Transcription and translation of core clock components (CLOCK, NPAS2, BMAL1, BMAL2, PER1, PER2, PER3, CRY1 and CRY2) plays a critical role in rhythm generation, whereas delays imposed by post-translational modifications (PTMs) are important for determining the period (tau) of the rhythms (tau refers to the period of a rhythm and is the length, in time, of one complete cycle). A diurnal rhythm is synchronized with the day/night cycle, while the ultradian and infradian rhythms have a period shorter and longer than 24 hours, respectively. Disruptions in the circadian rhythms contribute to the pathology of cardiovascular diseases, cancer, metabolic syndromes and aging. A transcription/translation feedback loop (TTFL) forms the core of the molecular circadian clock mechanism. Transcription factors, CLOCK or NPAS2 and BMAL1 or BMAL2, form the positive limb of the feedback loop, act in the form of a heterodimer and activate the transcription of core clock genes and clock-controlled genes (involved in key metabolic processes), harboring E-box elements (5'-CACGTG-3') within their promoters. The core clock genes: PER1/2/3 and CRY1/2 which are transcriptional repressors form the negative limb of the feedback loop and interact with the CLOCK|NPAS2-BMAL1|BMAL2 heterodimer inhibiting its activity and thereby negatively regulating their own expression. This heterodimer also activates nuclear receptors NR1D1/2 and RORA/B/G, which form a second feedback loop and which activate and repress BMAL1 transcription, respectively. BMAL1 positively regulates myogenesis and negatively regulates adipogenesis via the transcriptional control of the genes of the canonical Wnt signaling pathway. Plays a role in normal pancreatic beta-cell function; regulates glucose-stimulated insulin secretion via the regulation of antioxidant genes NFE2L2/NRF2 and its targets SESN2, PRDX3, CCLC and CCLM. Negatively regulates the mTORC1 signaling pathway; regulates the expression of MTOR and DEPTOR. Controls diurnal oscillations of Ly6C inflammatory monocytes; rhythmic recruitment of the PRC2 complex imparts diurnal variation to chemokine expression that is necessary to sustain Ly6C monocyte rhythms. Regulates the expression of HSD3B2, STAR, PTGS2, CYP11A1, CYP19A1 and LHCGR in the ovary and also the genes involved in hair growth. Plays an important role in adult hippocampal neurogenesis by regulating the timely entry of neural stem/progenitor cells (NSPCs) into the cell cycle and the number of cell divisions that take place prior to cell-cycle exit. Regulates the circadian expression of CIART and KLF11. The CLOCK-BMAL1 heterodimer regulates the circadian expression of SERPINE1/PAI1, VWF, B3, CCRN4L/NOC, NAMPT, DBP, MYOD1, PPARGC1A, PPARGC1B, SIRT1, GYS2, F7, NGFR, GNRHR, BHLHE40/DEC1, ATF4, MTA1, KLF10 and also genes implicated in glucose and lipid metabolism. Promotes rhythmic chromatin opening, regulating the DNA accessibility of other transcription factors. May play a role in spermatogenesis; contributes to the chromatoid body assembly and physiology. The NPAS2-BMAL1 heterodimer positively regulates the expression of MAOA, F7 and LDHA and modulates the circadian rhythm of daytime contrast sensitivity by regulating the rhythmic expression of adenylate cyclase type 1 (ADCY1) in the retina. The preferred binding motif for the CLOCK-BMAL1 heterodimer is 5'-CACGTGA-3', which contains a flanking adenine nucleotide at the 3-prime end of the canonical 6-nucleotide E-box sequence. CLOCK specifically binds to the half-site 5'-CAC-3', while BMAL1 binds to the half-site 5'-GTGA-3'. The CLOCK-BMAL1 heterodimer also recognizes the non-canonical E-box motifs 5'-AACGTGA-3' and 5'-CATGTGA-3'. Essential for the rhythmic interaction of CLOCK with ASS1 and plays a critical role in positively regulating CLOCK-mediated acetylation of ASS1. Plays a role in protecting against lethal sepsis by limiting the expression of immune checkpoint protein CD274 in macrophages in a PKM2-dependent manner. Regulates the diurnal rhythms of skeletal muscle metabolism via transcriptional activation of genes promoting triglyceride synthesis (DGAT2) and metabolic efficiency (COQ10B). The sequence is that of Basic helix-loop-helix ARNT-like protein 1 (Bmal1) from Mus musculus (Mouse).